The chain runs to 122 residues: Large ribosomal subunit protein uL14 (122 aa).

The protein belongs to the universal ribosomal protein uL14 family. Part of the 50S ribosomal subunit. Forms a cluster with proteins L3 and L19. In the 70S ribosome, L14 and L19 interact and together make contacts with the 16S rRNA in bridges B5 and B8.

Functionally, binds to 23S rRNA. Forms part of two intersubunit bridges in the 70S ribosome. This Rhizobium johnstonii (strain DSM 114642 / LMG 32736 / 3841) (Rhizobium leguminosarum bv. viciae) protein is Large ribosomal subunit protein uL14.